The sequence spans 163 residues: MGKSCKVVICGQHGVGKTSILEQLLYGNHVVGSDMIETQEDIYIGSVETDRGVREQVRFYDTRGLKDGLELPKHCFCGTDGYVLVYSVDNKDSFKRVEALKKEIDRSKDKKEVTIVVLGNKSDMKDQRRVDHEAAQQWAKAEKILLRNGPTHGSANWNLHPDH.

Residues 1–163 form a small GTPase-like region; the sequence is MGKSCKVVIC…SANWNLHPDH (163 aa). Position 11 to 18 (11 to 18) interacts with GTP; that stretch reads GQHGVGKT. The short motif at 35–43 is the Effector region element; that stretch reads MIETQEDIY. GTP contacts are provided by residues 61–65 and 120–123; these read DTRGL and NKSD.

The protein belongs to the small GTPase superfamily. Ras family. KappaB-Ras subfamily.

It localises to the cytoplasm. Functionally, atypical Ras-like protein that acts as a potent regulator of NF-kappa-B activity by preventing the degradation of NF-kappa-B inhibitor beta (NFKBIB) by most signals, explaining why NFKBIB is more resistant to degradation. The polypeptide is NF-kappa-B inhibitor-interacting Ras-like protein 2 (nkiras2) (Xenopus laevis (African clawed frog)).